The sequence spans 744 residues: Polyadenylate-binding protein, cytoplasmic and nuclear (744 aa).

Over residues 1–11 (MSEVANSTSPV) the composition is skewed to polar residues. The disordered stretch occupies residues 1 to 42 (MSEVANSTSPVQDGADANGAQINTNVPAASGDAPTPTTAAQQ). Low complexity predominate over residues 33 to 42 (APTPTTAAQQ). 4 consecutive RRM domains span residues 48–126 (ASLY…WSQR), 136–213 (GNVF…HHIP), 229–306 (TNIY…RAQK), and 332–462 (VNLY…LAQR). Disordered regions lie at residues 368 to 411 (EEKK…AGDK), 527 to 550 (GRGA…NAQQ), 607 to 651 (IAGG…PGVD), and 723 to 744 (VKNK…EEKA). The span at 376-397 (KEVKEEKKEDEKKEDEEAKEGS) shows a compositional bias: basic and acidic residues. Composition is skewed to gly residues over residues 527–545 (GRGA…GRGG), 609–632 (GGPG…GGRG), and 640–649 (PQGGRPGGPG). The PABC domain occupies 647–724 (GPGVDMSVLS…AMSVYDEYVK (78 aa)).

This sequence belongs to the polyadenylate-binding protein type-1 family.

It localises to the cytoplasm. It is found in the nucleus. Its function is as follows. Binds the poly(A) tail of mRNA. Appears to be an important mediator of the multiple roles of the poly(A) tail in mRNA biogenesis, stability and translation. In the nucleus, involved in both mRNA cleavage and polyadenylation. Is also required for efficient mRNA export to the cytoplasm. Acts in concert with a poly(A)-specific nuclease (PAN) to affect poly(A) tail shortening, which may occur concomitantly with either nucleocytoplasmic mRNA transport or translational initiation. In the cytoplasm, stimulates translation initiation and regulates mRNA decay through translation termination-coupled poly(A) shortening, probably mediated by PAN. In Phaeosphaeria nodorum (strain SN15 / ATCC MYA-4574 / FGSC 10173) (Glume blotch fungus), this protein is Polyadenylate-binding protein, cytoplasmic and nuclear (PAB1).